The primary structure comprises 141 residues: Hemoglobin subunit alpha (141 aa).

The Globin domain occupies 1–141 (VLSPADKTNV…VSTVLTSKYR (141 aa)). Position 3 is a phosphoserine (serine 3). An N6-succinyllysine modification is found at lysine 7. Threonine 8 is modified (phosphothreonine). Residue lysine 11 is modified to N6-succinyllysine. At lysine 16 the chain carries N6-acetyllysine; alternate. Lysine 16 bears the N6-succinyllysine; alternate mark. Residue tyrosine 24 is modified to Phosphotyrosine. Serine 35 bears the Phosphoserine mark. At lysine 40 the chain carries N6-succinyllysine. The residue at position 49 (serine 49) is a Phosphoserine. Histidine 58 serves as a coordination point for O2. Histidine 87 is a binding site for heme b. Serine 102 is modified (phosphoserine). At threonine 108 the chain carries Phosphothreonine. Residue serine 124 is modified to Phosphoserine. Threonine 134 and threonine 137 each carry phosphothreonine. A Phosphoserine modification is found at serine 138.

This sequence belongs to the globin family. In terms of assembly, heterotetramer of two alpha chains and two beta chains. In terms of tissue distribution, red blood cells.

Involved in oxygen transport from the lung to the various peripheral tissues. This is Hemoglobin subunit alpha from Tamias merriami (Merriam's chipmunk).